The following is a 178-amino-acid chain: Cytidylate kinase (178 aa).

Position 7-15 (7-15) interacts with ATP; the sequence is GLPGTGTTT.

It belongs to the cytidylate kinase family. Type 2 subfamily.

The protein localises to the cytoplasm. The catalysed reaction is CMP + ATP = CDP + ADP. The enzyme catalyses dCMP + ATP = dCDP + ADP. This Methanocaldococcus jannaschii (strain ATCC 43067 / DSM 2661 / JAL-1 / JCM 10045 / NBRC 100440) (Methanococcus jannaschii) protein is Cytidylate kinase (cmk).